A 185-amino-acid chain; its full sequence is Large ribosomal subunit protein bL25 (185 aa).

The protein belongs to the bacterial ribosomal protein bL25 family. CTC subfamily. Part of the 50S ribosomal subunit; part of the 5S rRNA/L5/L18/L25 subcomplex. Contacts the 5S rRNA. Binds to the 5S rRNA independently of L5 and L18.

This is one of the proteins that binds to the 5S RNA in the ribosome where it forms part of the central protuberance. The polypeptide is Large ribosomal subunit protein bL25 (Microcystis aeruginosa (strain NIES-843 / IAM M-2473)).